The sequence spans 151 residues: Protein SprT-like (151 aa).

Residues leucine 6–lysine 147 form the SprT-like domain. Histidine 67 lines the Zn(2+) pocket. Residue glutamate 68 is part of the active site. Histidine 71 provides a ligand contact to Zn(2+).

The protein belongs to the SprT family. Zn(2+) serves as cofactor.

The protein resides in the cytoplasm. This Staphylococcus aureus (strain Mu3 / ATCC 700698) protein is Protein SprT-like.